The primary structure comprises 76 residues: uncharacterized protein (76 aa).

Residues 6–60 enclose the HTH cro/C1-type domain; it reads LKKNRLEKGFTQEEVAKAAQIGRAYYTMIENGTRKPSVIVSKKIGEKLGFDWTIF. A DNA-binding region (H-T-H motif) is located at residues 17–36; the sequence is QEEVAKAAQIGRAYYTMIEN.

This is an uncharacterized protein from Bacillus subtilis (strain 168).